We begin with the raw amino-acid sequence, 548 residues long: Medium/long-chain-fatty-acid--CoA/3-oxocholest-4-en-26-oate--CoA ligase (548 aa).

Residues 174 to 182 (TGGTTGFPK), aspartate 415, arginine 430, and lysine 521 each bind ATP. Basic and acidic residues predominate over residues 520–541 (GKPDYRWAKEQTEARPADDVHA). Positions 520–548 (GKPDYRWAKEQTEARPADDVHAGHVTSGG) are disordered.

This sequence belongs to the ATP-dependent AMP-binding enzyme family.

It carries out the reaction a medium-chain fatty acid + ATP + CoA = a medium-chain fatty acyl-CoA + AMP + diphosphate. The enzyme catalyses a long-chain fatty acid + ATP + CoA = a long-chain fatty acyl-CoA + AMP + diphosphate. The catalysed reaction is (25S)-3-oxocholest-4-en-26-oate + ATP + CoA = (25S)-3-oxocholest-4-en-26-oyl-CoA + AMP + diphosphate. The protein operates within lipid metabolism; fatty acid biosynthesis. It functions in the pathway steroid metabolism; cholesterol metabolism. Functionally, catalyzes the activation of medium/long-chain fatty acids as acyl-coenzyme A (acyl-CoA), which are then transferred to the multifunctional polyketide synthase (PKS) type III for further chain extension. Also involved in the degradation of cholesterol via the degradation of the side chains of C-24 branched-chain sterols. Catalyzes the ATP-dependent CoA thioesterification of the sterol 3-oxocholest-4-en-26-oate to yield 3-oxocholest-4-en-26-oyl-CoA. The sequence is that of Medium/long-chain-fatty-acid--CoA/3-oxocholest-4-en-26-oate--CoA ligase from Mycobacterium bovis (strain ATCC BAA-935 / AF2122/97).